The chain runs to 540 residues: Glucose-6-phosphate isomerase (540 aa).

E350 (proton donor) is an active-site residue. Residues H381 and K503 contribute to the active site.

This sequence belongs to the GPI family.

It localises to the cytoplasm. It carries out the reaction alpha-D-glucose 6-phosphate = beta-D-fructose 6-phosphate. It functions in the pathway carbohydrate biosynthesis; gluconeogenesis. The protein operates within carbohydrate degradation; glycolysis; D-glyceraldehyde 3-phosphate and glycerone phosphate from D-glucose: step 2/4. Functionally, catalyzes the reversible isomerization of glucose-6-phosphate to fructose-6-phosphate. The polypeptide is Glucose-6-phosphate isomerase (Burkholderia lata (strain ATCC 17760 / DSM 23089 / LMG 22485 / NCIMB 9086 / R18194 / 383)).